The chain runs to 356 residues: S-adenosylmethionine:tRNA ribosyltransferase-isomerase (356 aa).

Belongs to the QueA family. As to quaternary structure, monomer.

Its subcellular location is the cytoplasm. It carries out the reaction 7-aminomethyl-7-carbaguanosine(34) in tRNA + S-adenosyl-L-methionine = epoxyqueuosine(34) in tRNA + adenine + L-methionine + 2 H(+). It participates in tRNA modification; tRNA-queuosine biosynthesis. Its function is as follows. Transfers and isomerizes the ribose moiety from AdoMet to the 7-aminomethyl group of 7-deazaguanine (preQ1-tRNA) to give epoxyqueuosine (oQ-tRNA). The chain is S-adenosylmethionine:tRNA ribosyltransferase-isomerase from Escherichia fergusonii (strain ATCC 35469 / DSM 13698 / CCUG 18766 / IAM 14443 / JCM 21226 / LMG 7866 / NBRC 102419 / NCTC 12128 / CDC 0568-73).